Consider the following 115-residue polypeptide: Toxin CSTX-9 (115 aa).

Positions 1 to 20 (MKVLVICAVLFLAIFSNSSA) are cleaved as a signal peptide. The propeptide occupies 21–47 (ETEDDFLEDESFEADDVIPFLAREQVR). 4 disulfide bridges follow: C53/C68, C60/C77, C67/C95, and C79/C93.

It belongs to the neurotoxin 19 (CSTX) family. In terms of assembly, monomer. Interacts with CSTX-13 (AC P83919) (Kd=370 nM), but does not interact with CSTX-1 (AC P81694). Expressed by the venom gland.

The protein localises to the secreted. Its subcellular location is the target cell membrane. Synergistic toxin that induces or increases a cytolytic effect when combined with CSTX-1 (AC P81694) or CSTX-13 (AC P83919). Potassium ions and M-ctenitoxin-Cs1a (AC P83619) have also an effect on its activity. When alone, has no insecticidal activity. The sequence is that of Toxin CSTX-9 from Cupiennius salei (American wandering spider).